The sequence spans 149 residues: Transcriptional repressor NrdR (149 aa).

The segment at 3 to 34 (CPFCSAVDTKVIDSRLVAEGHQVRRRRECLLC) is a zinc-finger region. The region spanning 49–139 (PRVIKSNGSR…VYRSFEDIRE (91 aa)) is the ATP-cone domain.

It belongs to the NrdR family. Zn(2+) is required as a cofactor.

Functionally, negatively regulates transcription of bacterial ribonucleotide reductase nrd genes and operons by binding to NrdR-boxes. This chain is Transcriptional repressor NrdR, found in Aeromonas salmonicida (strain A449).